The sequence spans 404 residues: Deoxyguanosinetriphosphate triphosphohydrolase-like protein (404 aa).

The tract at residues 1 to 32 (MAVGMAAPHATYASDPARSRGRLFDEPPSKTR) is disordered. Residues 22–32 (RLFDEPPSKTR) show a composition bias toward basic and acidic residues. Positions 69-217 (RLTHTLEVAQ…AAIADDIAYD (149 aa)) constitute an HD domain.

Belongs to the dGTPase family. Type 2 subfamily.

The protein is Deoxyguanosinetriphosphate triphosphohydrolase-like protein of Nitrobacter hamburgensis (strain DSM 10229 / NCIMB 13809 / X14).